Reading from the N-terminus, the 167-residue chain is ATP synthase subunit b (167 aa).

Residues 8–28 (AEAEFWVGAGLLIFLGIVFFG) traverse the membrane as a helical segment.

It belongs to the ATPase B chain family. In terms of assembly, F-type ATPases have 2 components, F(1) - the catalytic core - and F(0) - the membrane proton channel. F(1) has five subunits: alpha(3), beta(3), gamma(1), delta(1), epsilon(1). F(0) has three main subunits: a(1), b(2) and c(10-14). The alpha and beta chains form an alternating ring which encloses part of the gamma chain. F(1) is attached to F(0) by a central stalk formed by the gamma and epsilon chains, while a peripheral stalk is formed by the delta and b chains.

It localises to the cell inner membrane. Functionally, f(1)F(0) ATP synthase produces ATP from ADP in the presence of a proton or sodium gradient. F-type ATPases consist of two structural domains, F(1) containing the extramembraneous catalytic core and F(0) containing the membrane proton channel, linked together by a central stalk and a peripheral stalk. During catalysis, ATP synthesis in the catalytic domain of F(1) is coupled via a rotary mechanism of the central stalk subunits to proton translocation. In terms of biological role, component of the F(0) channel, it forms part of the peripheral stalk, linking F(1) to F(0). This Phenylobacterium zucineum (strain HLK1) protein is ATP synthase subunit b.